The chain runs to 1399 residues: DNA-directed RNA polymerase subunit beta' (1399 aa).

4 residues coordinate Zn(2+): cysteine 70, cysteine 72, cysteine 85, and cysteine 88. Positions 460, 462, and 464 each coordinate Mg(2+). Zn(2+) is bound by residues cysteine 814, cysteine 888, cysteine 895, and cysteine 898. Positions 1367-1399 are disordered; it reads SERKRQRDLGKPQRVSASEAEAALTEALNSSGN. Residues 1382-1399 show a composition bias toward low complexity; it reads SASEAEAALTEALNSSGN.

The protein belongs to the RNA polymerase beta' chain family. The RNAP catalytic core consists of 2 alpha, 1 beta, 1 beta' and 1 omega subunit. When a sigma factor is associated with the core the holoenzyme is formed, which can initiate transcription. Mg(2+) is required as a cofactor. The cofactor is Zn(2+).

It catalyses the reaction RNA(n) + a ribonucleoside 5'-triphosphate = RNA(n+1) + diphosphate. DNA-dependent RNA polymerase catalyzes the transcription of DNA into RNA using the four ribonucleoside triphosphates as substrates. In Pseudomonas aeruginosa (strain UCBPP-PA14), this protein is DNA-directed RNA polymerase subunit beta'.